A 252-amino-acid polypeptide reads, in one-letter code: Tricin synthase 1 (252 aa).

S-adenosyl-L-methionine is bound by residues S65, E87, 89–90 (GV), S95, and D113. Residue D168 coordinates a divalent metal cation. D170 contacts S-adenosyl-L-methionine. A divalent metal cation is bound by residues D194 and N195.

Belongs to the class I-like SAM-binding methyltransferase superfamily. Cation-dependent O-methyltransferase family. CCoAMT subfamily. Mg(2+) serves as cofactor. Requires Mn(2+) as cofactor. The cofactor is Co(2+). As to expression, ubiquitous. Highest expression in stems and roots.

The protein localises to the nucleus. The enzyme catalyses tricetin + 2 S-adenosyl-L-methionine = 3',5'-di-O-methyltricetin + 2 S-adenosyl-L-homocysteine + 2 H(+). Functionally, catalyzes the stepwise methylation of tricetin to its 3'-mono- and 3',5'-dimethyl ethers. No 3',4',5'-trimethylated ester derivatives are produced. Can use caffeoyl-CoA, 5-hydroxyferulic acid, luteolin, tricetin, quercetin, myrcetin and 7,8-dihydroxyflavone as substrates, but not naringenin, apigenin or kaempferol. The 2,3-double bond and the O-dihydroxyl group of the substrate are both required for catalytic activity of the enzyme. The chain is Tricin synthase 1 (ROMT-15) from Oryza sativa subsp. japonica (Rice).